The following is a 427-amino-acid chain: Adenylosuccinate synthetase (427 aa).

GTP-binding positions include 12–18 (GDEGKGK) and 40–42 (GHT). The Proton acceptor role is filled by Asp13. Residues Asp13 and Gly40 each contribute to the Mg(2+) site. IMP-binding positions include 13–16 (DEGK), 38–41 (NAGH), Thr128, Arg142, Gln223, Thr238, and Arg302. His41 (proton donor) is an active-site residue. 298–304 (VTTGRAR) lines the substrate pocket. Residues Arg304, 330–332 (KLD), and 412–414 (GVG) each bind GTP.

The protein belongs to the adenylosuccinate synthetase family. Homodimer. Mg(2+) is required as a cofactor.

The protein resides in the cytoplasm. It carries out the reaction IMP + L-aspartate + GTP = N(6)-(1,2-dicarboxyethyl)-AMP + GDP + phosphate + 2 H(+). Its pathway is purine metabolism; AMP biosynthesis via de novo pathway; AMP from IMP: step 1/2. Its function is as follows. Plays an important role in the de novo pathway of purine nucleotide biosynthesis. Catalyzes the first committed step in the biosynthesis of AMP from IMP. This is Adenylosuccinate synthetase from Parafrankia sp. (strain EAN1pec).